The primary structure comprises 126 residues: Fluoride-specific ion channel FluC (126 aa).

4 consecutive transmembrane segments (helical) span residues 6–26, 36–56, 69–89, and 99–119; these read FLAV…LAIL, YGTL…VGFF, LVIT…GEVV, and IGVL…MLGF. Na(+)-binding residues include G76 and T79.

Belongs to the fluoride channel Fluc/FEX (TC 1.A.43) family.

It is found in the cell inner membrane. It catalyses the reaction fluoride(in) = fluoride(out). Its activity is regulated as follows. Na(+) is not transported, but it plays an essential structural role and its presence is essential for fluoride channel function. Functionally, fluoride-specific ion channel. Important for reducing fluoride concentration in the cell, thus reducing its toxicity. This Ralstonia pickettii (strain 12J) protein is Fluoride-specific ion channel FluC.